We begin with the raw amino-acid sequence, 2325 residues long: Protein sidekick homolog (2325 aa).

The N-terminal stretch at 1–26 (MRNRLLLIFYTTTVLWTIGYTQLVLG) is a signal peptide. The Extracellular portion of the chain corresponds to 27–2019 (KPPIFQDGGS…IPDDPFYTTW (1993 aa)). Ig-like C2-type domains follow at residues 28–105 (PPIF…AAIS), 217–319 (PSLQ…AYMT), and 324–397 (PILK…ADLA). Intrachain disulfides connect cysteine 52-cysteine 94, cysteine 247-cysteine 301, and cysteine 345-cysteine 386. A glycan (N-linked (GlcNAc...) asparagine) is linked at asparagine 407. 2 Ig-like C2-type domains span residues 456–544 (PSQK…VQVN) and 547–638 (SLIE…AMLQ). 2 cysteine pairs are disulfide-bonded: cysteine 480–cysteine 528 and cysteine 568–cysteine 622. N-linked (GlcNAc...) asparagine glycans are attached at residues asparagine 632, asparagine 655, asparagine 807, asparagine 868, asparagine 932, and asparagine 1016. 13 consecutive Fibronectin type-III domains span residues 645 to 751 (MPER…MPQQ), 756 to 853 (APRN…TSEG), 858 to 957 (APKN…TEED), 961 to 1055 (SVDE…VPPE), 1059 to 1154 (RPSM…TLQT), 1159 to 1254 (PSQR…TYES), 1259 to 1359 (SPRN…TMED), 1363 to 1457 (PPES…SSVR), 1463 to 1566 (APAP…TLPS), 1571 to 1671 (QPIS…VGYS), 1673 to 1775 (PKRN…DKPG), 1776 to 1872 (PVGI…SKDG), and 1873 to 2004 (PPPP…TEQL). A disordered region spans residues 1036–1059 (TRKGDGPVEETKFESGVPPELPGR). Over residues 1037-1048 (RKGDGPVEETKF) the composition is skewed to basic and acidic residues. N-linked (GlcNAc...) asparagine glycosylation occurs at asparagine 1107. The interval 1137-1161 (KGRGAPSEPSRSFETLQTNPDTPSQ) is disordered. Over residues 1145–1161 (PSRSFETLQTNPDTPSQ) the composition is skewed to polar residues. An N-linked (GlcNAc...) asparagine glycan is attached at asparagine 1614. Disordered stretches follow at residues 1857 to 1884 (GEQR…ITSG) and 1918 to 1947 (PANG…ATST). Asparagine 1863 carries N-linked (GlcNAc...) asparagine glycosylation. Residues 1935 to 1947 (AKSAAQTAAATST) show a composition bias toward low complexity. A helical transmembrane segment spans residues 2020–2040 (WFMALVAMGAFVLIVIIIAIL). The Cytoplasmic segment spans residues 2041–2325 (CVTGSSAKYR…NLTTGFSSFV (285 aa)). Disordered regions lie at residues 2080-2113 (NMTR…SVLG), 2164-2187 (TAYV…PTRS), 2202-2226 (RGHI…LQQP), and 2285-2325 (ILTG…SSFV). Residues 2091–2100 (PGTTQSWVSD) are compositionally biased toward polar residues. Residues 2215–2226 (GSQPQGSPLQQP) show a composition bias toward low complexity. Composition is skewed to polar residues over residues 2294-2305 (AGRSSTTDSTSE) and 2313-2325 (ATPN…SSFV).

This sequence belongs to the sidekick family.

It localises to the membrane. In terms of biological role, cell adhesion protein. This Caenorhabditis elegans protein is Protein sidekick homolog (rig-4).